We begin with the raw amino-acid sequence, 225 residues long: 3-dehydroquinate dehydratase (225 aa).

3-dehydroquinate-binding positions include Ser6, 30–32 (EWR), and Arg62. His118 acts as the Proton donor/acceptor in catalysis. Lys143 acts as the Schiff-base intermediate with substrate in catalysis. The 3-dehydroquinate site is built by Arg186, Ser205, and Gln209.

This sequence belongs to the type-I 3-dehydroquinase family. Homodimer.

The enzyme catalyses 3-dehydroquinate = 3-dehydroshikimate + H2O. Its pathway is metabolic intermediate biosynthesis; chorismate biosynthesis; chorismate from D-erythrose 4-phosphate and phosphoenolpyruvate: step 3/7. Its function is as follows. Involved in the third step of the chorismate pathway, which leads to the biosynthesis of aromatic amino acids. Catalyzes the cis-dehydration of 3-dehydroquinate (DHQ) and introduces the first double bond of the aromatic ring to yield 3-dehydroshikimate. The polypeptide is 3-dehydroquinate dehydratase (Streptococcus sanguinis (strain SK36)).